Here is a 135-residue protein sequence, read N- to C-terminus: UPF0306 protein C8J_1355 (135 aa).

It belongs to the UPF0306 family.

The polypeptide is UPF0306 protein C8J_1355 (Campylobacter jejuni subsp. jejuni serotype O:6 (strain 81116 / NCTC 11828)).